Reading from the N-terminus, the 37-residue chain is Calcitonin gene-related peptide 1 (37 aa).

A disulfide bridge connects residues Cys-2 and Cys-7. Phe-37 bears the Phenylalanine amide mark.

Belongs to the calcitonin family.

The protein localises to the secreted. CGRP1/CALCA is a peptide hormone that induces vasodilation mediated by the CALCRL-RAMP1 receptor complex. Dilates a variety of vessels including the coronary, cerebral and systemic vasculature. Its abundance in the CNS also points toward a neurotransmitter or neuromodulator role. It also elevates platelet cAMP. CGRP1 can also bind and activate CALCR-RAMP1 (AMYR1) receptor complex. In Sus scrofa (Pig), this protein is Calcitonin gene-related peptide 1 (CALCA).